A 252-amino-acid chain; its full sequence is uncharacterized protein (252 aa).

This is an uncharacterized protein from Rickettsia prowazekii (strain Madrid E).